The chain runs to 286 residues: Puff II/9-2 protein (286 aa).

Residues 1 to 19 (MKQFIVLTVVLLAIQELQG) form the signal peptide. Residues 61-235 (IDGLKKENNI…EKDLNTLRCE (175 aa)) form a helical region. An N-linked (GlcNAc...) asparagine glycan is attached at Asn156.

The protein is Puff II/9-2 protein (II/9-2) of Bradysia coprophila (Dark-winged fungus gnat).